The following is a 423-amino-acid chain: Glutamyl-tRNA(Gln) amidotransferase subunit A (423 aa).

Catalysis depends on charge relay system residues lysine 28 and serine 103. Serine 127 (acyl-ester intermediate) is an active-site residue.

This sequence belongs to the amidase family. GatA subfamily. Heterotrimer of A, B and C subunits.

It catalyses the reaction L-glutamyl-tRNA(Gln) + L-glutamine + ATP + H2O = L-glutaminyl-tRNA(Gln) + L-glutamate + ADP + phosphate + H(+). In terms of biological role, allows the formation of correctly charged Gln-tRNA(Gln) through the transamidation of misacylated Glu-tRNA(Gln) in organisms which lack glutaminyl-tRNA synthetase. The reaction takes place in the presence of glutamine and ATP through an activated gamma-phospho-Glu-tRNA(Gln). This Halobacterium salinarum (strain ATCC 700922 / JCM 11081 / NRC-1) (Halobacterium halobium) protein is Glutamyl-tRNA(Gln) amidotransferase subunit A.